The primary structure comprises 126 residues: Phosphoribosyl-AMP cyclohydrolase (126 aa).

Aspartate 76 contacts Mg(2+). Residue cysteine 77 participates in Zn(2+) binding. Residues aspartate 78 and aspartate 80 each coordinate Mg(2+). Positions 94 and 101 each coordinate Zn(2+).

The protein belongs to the PRA-CH family. Homodimer. Mg(2+) is required as a cofactor. The cofactor is Zn(2+).

It is found in the cytoplasm. The catalysed reaction is 1-(5-phospho-beta-D-ribosyl)-5'-AMP + H2O = 1-(5-phospho-beta-D-ribosyl)-5-[(5-phospho-beta-D-ribosylamino)methylideneamino]imidazole-4-carboxamide. Its pathway is amino-acid biosynthesis; L-histidine biosynthesis; L-histidine from 5-phospho-alpha-D-ribose 1-diphosphate: step 3/9. In terms of biological role, catalyzes the hydrolysis of the adenine ring of phosphoribosyl-AMP. The sequence is that of Phosphoribosyl-AMP cyclohydrolase from Nitratidesulfovibrio vulgaris (strain ATCC 29579 / DSM 644 / CCUG 34227 / NCIMB 8303 / VKM B-1760 / Hildenborough) (Desulfovibrio vulgaris).